Consider the following 663-residue polypeptide: Fructose-1,6-bisphosphatase class 3 1 (663 aa).

It belongs to the FBPase class 3 family. The cofactor is Mn(2+).

It catalyses the reaction beta-D-fructose 1,6-bisphosphate + H2O = beta-D-fructose 6-phosphate + phosphate. It participates in carbohydrate biosynthesis; gluconeogenesis. The sequence is that of Fructose-1,6-bisphosphatase class 3 1 from Clostridium beijerinckii (strain ATCC 51743 / NCIMB 8052) (Clostridium acetobutylicum).